Consider the following 392-residue polypeptide: uncharacterized protein (392 aa).

Positions 7-76 constitute a J domain; it reads TEYYDLLGIS…RSQYDQFGKE (70 aa). Serine 108 carries the phosphoserine modification.

This is an uncharacterized protein from Schizosaccharomyces pombe (strain 972 / ATCC 24843) (Fission yeast).